An 800-amino-acid polypeptide reads, in one-letter code: Putative antiporter subunit mnhA2 (800 aa).

20 helical membrane passes run 1–21, 33–53, 78–98, 118–138, 167–187, 207–227, 241–261, 273–293, 300–320, 331–351, 387–407, 424–444, 472–492, 527–547, 595–615, 627–647, 651–671, 676–696, 712–732, and 768–788; these read MSLV…LLMS, IALV…PSVA, GLSL…FFYA, LFMF…MYIF, FMIT…LYIM, GLFI…SAQF, TPVS…FLLL, YIYI…ITAL, GILA…VGIG, IASI…NHAI, LVMT…GFLS, FSLI…IFTF, PWLF…IFFV, GFNI…VLAI, IIMT…RIGL, GALE…LIFI, LTMV…FIAM, LALT…VSFS, IIKI…IFIT, and LDTL…YTLL.

Belongs to the CPA3 antiporters (TC 2.A.63) subunit A family. As to quaternary structure, may form a heterooligomeric complex that consists of seven subunits: mnhA2, mnhB2, mnhC2, mnhD2, mnhE2, mnhF2 and mnhG2.

Its subcellular location is the cell membrane. The polypeptide is Putative antiporter subunit mnhA2 (mnhA2) (Staphylococcus aureus (strain Mu3 / ATCC 700698)).